Reading from the N-terminus, the 344-residue chain is Anthranilate phosphoribosyltransferase (344 aa).

5-phospho-alpha-D-ribose 1-diphosphate-binding positions include Gly84, 87–88 (GD), Thr92, 94–97 (NIST), 112–120 (KHGNRSVSS), and Ser124. Gly84 lines the anthranilate pocket. A Mg(2+)-binding site is contributed by Ser96. Asn115 contacts anthranilate. Anthranilate is bound at residue Arg170. Mg(2+)-binding residues include Asp229 and Glu230.

This sequence belongs to the anthranilate phosphoribosyltransferase family. Homodimer. Requires Mg(2+) as cofactor.

It carries out the reaction N-(5-phospho-beta-D-ribosyl)anthranilate + diphosphate = 5-phospho-alpha-D-ribose 1-diphosphate + anthranilate. It participates in amino-acid biosynthesis; L-tryptophan biosynthesis; L-tryptophan from chorismate: step 2/5. Its function is as follows. Catalyzes the transfer of the phosphoribosyl group of 5-phosphorylribose-1-pyrophosphate (PRPP) to anthranilate to yield N-(5'-phosphoribosyl)-anthranilate (PRA). This Xylella fastidiosa (strain 9a5c) protein is Anthranilate phosphoribosyltransferase.